The primary structure comprises 185 residues: Putative F-box protein At3g17400 (185 aa).

The F-box domain occupies 1 to 47 (MMTLSDLPSDLAEEVLSKIPVTSLRGVRATCKKWNTLSKDRSFTRKH).

The sequence is that of Putative F-box protein At3g17400 from Arabidopsis thaliana (Mouse-ear cress).